Consider the following 694-residue polypeptide: Elongation factor G (694 aa).

Residues 8–287 enclose the tr-type G domain; it reads EDYRNFGIMA…AVVEFLPAPT (280 aa). GTP is bound by residues 17-24, 86-90, and 140-143; these read AHIDAGKT, DTPGH, and NKMD.

Belongs to the TRAFAC class translation factor GTPase superfamily. Classic translation factor GTPase family. EF-G/EF-2 subfamily.

The protein resides in the cytoplasm. Catalyzes the GTP-dependent ribosomal translocation step during translation elongation. During this step, the ribosome changes from the pre-translocational (PRE) to the post-translocational (POST) state as the newly formed A-site-bound peptidyl-tRNA and P-site-bound deacylated tRNA move to the P and E sites, respectively. Catalyzes the coordinated movement of the two tRNA molecules, the mRNA and conformational changes in the ribosome. The protein is Elongation factor G of Brucella ovis (strain ATCC 25840 / 63/290 / NCTC 10512).